The chain runs to 279 residues: Small ribosomal subunit protein uS3 (279 aa).

The region spanning 17–86 (VDEYFLEKLE…NPQIDVQEVK (70 aa)) is the KH type-2 domain. 2 stretches are compositionally biased toward low complexity: residues 206–233 (AEKK…STAA) and 241–252 (ESEAAEAVTPEG). Residues 206–279 (AEKKSPAAGA…VVKTDGDSQS (74 aa)) form a disordered region.

This sequence belongs to the universal ribosomal protein uS3 family. Part of the 30S ribosomal subunit.

In terms of biological role, binds the lower part of the 30S subunit head. In Methanocella arvoryzae (strain DSM 22066 / NBRC 105507 / MRE50), this protein is Small ribosomal subunit protein uS3.